We begin with the raw amino-acid sequence, 144 residues long: Phospholipase A2, membrane associated (144 aa).

Residues 1-20 (MKTLLLLAVIMIFGLLQAHG) form the signal peptide. Cystine bridges form between Cys-46-Cys-137, Cys-48-Cys-64, Cys-63-Cys-117, Cys-69-Cys-144, Cys-70-Cys-110, Cys-79-Cys-103, and Cys-97-Cys-108. Ca(2+) is bound by residues His-47, Gly-49, and Gly-51. His-67 is a catalytic residue. A Ca(2+)-binding site is contributed by Asp-68. Asp-111 is a catalytic residue.

The protein belongs to the phospholipase A2 family. Requires Ca(2+) as cofactor. Expressed in various tissues including heart, kidney, liver, lung, pancreas, placenta, skeletal muscle, prostate, ovary, colon and small intestine. Not detected in lymphoid organs and brain. Expressed in platelets (at protein level).

The protein localises to the secreted. It localises to the cell membrane. Its subcellular location is the mitochondrion outer membrane. It catalyses the reaction a 1,2-diacyl-sn-glycero-3-phosphoethanolamine + H2O = a 1-acyl-sn-glycero-3-phosphoethanolamine + a fatty acid + H(+). The enzyme catalyses 1-hexadecanoyl-2-(9Z-octadecenoyl)-sn-glycero-3-phosphoethanolamine + H2O = 1-hexadecanoyl-sn-glycero-3-phosphoethanolamine + (9Z)-octadecenoate + H(+). The catalysed reaction is 1-hexadecanoyl-2-(9Z,12Z-octadecadienoyl)-sn-glycero-3-phosphoethanolamine + H2O = 1-hexadecanoyl-sn-glycero-3-phosphoethanolamine + (9Z,12Z)-octadecadienoate + H(+). It carries out the reaction 1-hexadecanoyl-2-(5Z,8Z,11Z,14Z-eicosatetraenoyl)-sn-glycero-3-phosphoethanolamine + H2O = 1-hexadecanoyl-sn-glycero-3-phosphoethanolamine + (5Z,8Z,11Z,14Z)-eicosatetraenoate + H(+). It catalyses the reaction N-hexadecanoyl-1,2-di-(9Z-octadecenoyl)-sn-glycero-3-phosphoethanolamine + H2O = N-hexadecanoyl-1-(9Z-octadecenoyl)-sn-glycero-3-phosphoethanolamine + (9Z)-octadecenoate + H(+). The enzyme catalyses 1,2-dihexadecanoyl-sn-glycero-3-phospho-(1'-sn-glycerol) + H2O = 1-hexadecanoyl-sn-glycero-3-phospho-(1'-sn-glycerol) + hexadecanoate + H(+). The catalysed reaction is 1-hexadecanoyl-2-(9Z-octadecenoyl)-sn-glycero-3-phosphoglycerol + H2O = 1-hexadecanoyl-sn-glycero-3-phosphoglycerol + (9Z)-octadecenoate + H(+). It carries out the reaction 1-hexadecanoyl-2-(9Z-octadecenoyl)-sn-glycero-3-phospho-(1'-sn-glycerol) + H2O = 1-hexadecanoyl-sn-glycero-3-phospho-(1'-sn-glycerol) + (9Z)-octadecenoate + H(+). It catalyses the reaction a 1,2-diacyl-sn-glycero-3-phosphocholine + H2O = a 1-acyl-sn-glycero-3-phosphocholine + a fatty acid + H(+). The enzyme catalyses 1,2-dihexadecanoyl-sn-glycero-3-phosphocholine + H2O = 1-hexadecanoyl-sn-glycero-3-phosphocholine + hexadecanoate + H(+). The catalysed reaction is 1-hexadecanoyl-2-(9Z-octadecenoyl)-sn-glycero-3-phosphocholine + H2O = 1-hexadecanoyl-sn-glycero-3-phosphocholine + (9Z)-octadecenoate + H(+). It carries out the reaction 1-hexadecanoyl-2-(9Z,12Z-octadecadienoyl)-sn-glycero-3-phosphocholine + H2O = (9Z,12Z)-octadecadienoate + 1-hexadecanoyl-sn-glycero-3-phosphocholine + H(+). It catalyses the reaction 1-hexadecanoyl-2-(4Z,7Z,10Z,13Z,16Z,19Z-docosahexaenoyl)-sn-glycero-3-phosphocholine + H2O = (4Z,7Z,10Z,13Z,16Z,19Z)-docosahexaenoate + 1-hexadecanoyl-sn-glycero-3-phosphocholine + H(+). Functionally, secretory calcium-dependent phospholipase A2 that primarily targets extracellular phospholipids with implications in host antimicrobial defense, inflammatory response and tissue regeneration. Hydrolyzes the ester bond of the fatty acyl group attached at sn-2 position of phospholipids (phospholipase A2 activity) with preference for phosphatidylethanolamines and phosphatidylglycerols over phosphatidylcholines. Contributes to lipid remodeling of cellular membranes and generation of lipid mediators involved in pathogen clearance. Displays bactericidal activity against Gram-positive bacteria by directly hydrolyzing phospholipids of the bacterial membrane. Upon sterile inflammation, targets membrane phospholipids of extracellular mitochondria released from activated platelets, generating free unsaturated fatty acids such as arachidonate that is used by neighboring leukocytes to synthesize inflammatory eicosanoids such as leukotrienes. Simultaneously, by compromising mitochondrial membrane integrity, promotes the release in circulation of potent damage-associated molecular pattern molecules that activate the innate immune response. Plays a stem cell regulator role in the intestinal crypt. Within intracellular compartment mediates Paneth cell differentiation and its stem cell supporting functions by inhibiting Wnt signaling pathway in intestinal stem cell (ICS). Secreted in the intestinal lumen upon inflammation, acts in an autocrine way and promotes prostaglandin E2 synthesis that stimulates Wnt signaling pathway in ICS cells and tissue regeneration. May play a role in the biosynthesis of N-acyl ethanolamines that regulate energy metabolism and inflammation. Hydrolyzes N-acyl phosphatidylethanolamines to N-acyl lysophosphatidylethanolamines, which are further cleaved by a lysophospholipase D to release N-acyl ethanolamines. Independent of its catalytic activity, acts as a ligand for integrins. Binds to and activates integrins ITGAV:ITGB3, ITGA4:ITGB1 and ITGA5:ITGB1. Binds to a site (site 2) which is distinct from the classical ligand-binding site (site 1) and induces integrin conformational changes and enhanced ligand binding to site 1. Induces cell proliferation in an integrin-dependent manner. The polypeptide is Phospholipase A2, membrane associated (PLA2G2A) (Homo sapiens (Human)).